Here is a 612-residue protein sequence, read N- to C-terminus: Chaperone protein DnaK (612 aa).

Thr-174 carries the post-translational modification Phosphothreonine; by autocatalysis. Residues 579–612 are disordered; the sequence is GSAGTGAGSQAGSAAGSGDGQSMDAEFKVKDEDK. The segment covering 581 to 597 has biased composition (gly residues); sequence AGTGAGSQAGSAAGSGD. Residues 603–612 show a composition bias toward basic and acidic residues; sequence AEFKVKDEDK.

The protein belongs to the heat shock protein 70 family.

Functionally, acts as a chaperone. In Symbiobacterium thermophilum (strain DSM 24528 / JCM 14929 / IAM 14863 / T), this protein is Chaperone protein DnaK.